Consider the following 389-residue polypeptide: Maintenance of mitochondrial morphology protein 1-1 (389 aa).

Over 1–22 (MSQFVLPAVASEGIINWPFLTG) the chain is Lumenal. Residues 23 to 43 (FMLGQFSVGLVLLIFVRFFIF) traverse the membrane as a helical segment. Residues 44–389 (SDQTEPDINT…YRSLQTSPRR (346 aa)) lie on the Cytoplasmic side of the membrane. One can recognise an SMP-LTD domain in the interval 83-278 (QPESLDWFSV…YPEYQQFELP (196 aa)). Disordered regions lie at residues 283 to 345 (KTSA…PKFI) and 360 to 389 (FYEM…SPRR). The span at 330–341 (MSMSSQRPNINN) shows a compositional bias: polar residues.

The protein belongs to the MMM1 family. As to quaternary structure, homodimer. Component of the ER-mitochondria encounter structure (ERMES) or MDM complex, composed of MMM1, MDM10, MDM12 and MDM34. An MMM1 homodimer associates with one molecule of MDM12 on each side in a pairwise head-to-tail manner, and the SMP-LTD domains of MMM1 and MDM12 generate a continuous hydrophobic tunnel for phospholipid trafficking.

It localises to the endoplasmic reticulum membrane. Functionally, component of the ERMES/MDM complex, which serves as a molecular tether to connect the endoplasmic reticulum (ER) and mitochondria. Components of this complex are involved in the control of mitochondrial shape and protein biogenesis, and function in nonvesicular lipid trafficking between the ER and mitochondria. The MDM12-MMM11 subcomplex functions in the major beta-barrel assembly pathway that is responsible for biogenesis of all outer membrane beta-barrel proteins, and acts in a late step after the SAM complex. The MDM10-MDM12-MMM1 subcomplex further acts in the TOM40-specific pathway after the action of the MDM12-MMM1 complex. Essential for establishing and maintaining the structure of mitochondria and maintenance of mtDNA nucleoids. The protein is Maintenance of mitochondrial morphology protein 1-1 of Yarrowia lipolytica (strain CLIB 122 / E 150) (Yeast).